A 223-amino-acid polypeptide reads, in one-letter code: Phosphoribosylformylglycinamidine synthase subunit PurQ (223 aa).

The Glutamine amidotransferase type-1 domain occupies 3 to 223 (FAVLVFPGSN…MVKSWREQHV (221 aa)). Cysteine 85 functions as the Nucleophile in the catalytic mechanism. Residues histidine 193 and glutamate 195 contribute to the active site.

Part of the FGAM synthase complex composed of 1 PurL, 1 PurQ and 2 PurS subunits.

It is found in the cytoplasm. The enzyme catalyses N(2)-formyl-N(1)-(5-phospho-beta-D-ribosyl)glycinamide + L-glutamine + ATP + H2O = 2-formamido-N(1)-(5-O-phospho-beta-D-ribosyl)acetamidine + L-glutamate + ADP + phosphate + H(+). The catalysed reaction is L-glutamine + H2O = L-glutamate + NH4(+). It participates in purine metabolism; IMP biosynthesis via de novo pathway; 5-amino-1-(5-phospho-D-ribosyl)imidazole from N(2)-formyl-N(1)-(5-phospho-D-ribosyl)glycinamide: step 1/2. Part of the phosphoribosylformylglycinamidine synthase complex involved in the purines biosynthetic pathway. Catalyzes the ATP-dependent conversion of formylglycinamide ribonucleotide (FGAR) and glutamine to yield formylglycinamidine ribonucleotide (FGAM) and glutamate. The FGAM synthase complex is composed of three subunits. PurQ produces an ammonia molecule by converting glutamine to glutamate. PurL transfers the ammonia molecule to FGAR to form FGAM in an ATP-dependent manner. PurS interacts with PurQ and PurL and is thought to assist in the transfer of the ammonia molecule from PurQ to PurL. This is Phosphoribosylformylglycinamidine synthase subunit PurQ from Staphylococcus aureus (strain MRSA252).